We begin with the raw amino-acid sequence, 357 residues long: Membrane-bound lytic murein transglycosylase C (357 aa).

An N-terminal signal peptide occupies residues 1–15 (MKKYLLLALLPFLYA). A lipid anchor (N-palmitoyl cysteine) is attached at C16. A lipid anchor (S-diacylglycerol cysteine) is attached at C16.

Belongs to the transglycosylase Slt family.

Its subcellular location is the cell outer membrane. The catalysed reaction is Exolytic cleavage of the (1-&gt;4)-beta-glycosidic linkage between N-acetylmuramic acid (MurNAc) and N-acetylglucosamine (GlcNAc) residues in peptidoglycan, from either the reducing or the non-reducing ends of the peptidoglycan chains, with concomitant formation of a 1,6-anhydrobond in the MurNAc residue.. Its function is as follows. Murein-degrading enzyme. May play a role in recycling of muropeptides during cell elongation and/or cell division. The chain is Membrane-bound lytic murein transglycosylase C from Haemophilus influenzae (strain ATCC 51907 / DSM 11121 / KW20 / Rd).